Consider the following 238-residue polypeptide: NADH-quinone oxidoreductase subunit I (238 aa).

4Fe-4S ferredoxin-type domains lie at 81–111 (LVPR…IEAG) and 123–152 (VKFV…MDSG). The [4Fe-4S] cluster site is built by C91, C94, C97, C101, C132, C135, C138, and C142.

This sequence belongs to the complex I 23 kDa subunit family. In terms of assembly, NDH-1 is composed of 14 different subunits. Subunits NuoA, H, J, K, L, M, N constitute the membrane sector of the complex. [4Fe-4S] cluster serves as cofactor.

It localises to the cell inner membrane. It carries out the reaction a quinone + NADH + 5 H(+)(in) = a quinol + NAD(+) + 4 H(+)(out). In terms of biological role, NDH-1 shuttles electrons from NADH, via FMN and iron-sulfur (Fe-S) centers, to quinones in the respiratory chain. The immediate electron acceptor for the enzyme in this species is believed to be ubiquinone. Couples the redox reaction to proton translocation (for every two electrons transferred, four hydrogen ions are translocated across the cytoplasmic membrane), and thus conserves the redox energy in a proton gradient. This chain is NADH-quinone oxidoreductase subunit I, found in Anaeromyxobacter sp. (strain Fw109-5).